Consider the following 184-residue polypeptide: ATP synthase subunit b, chloroplastic (184 aa).

The helical transmembrane segment at 31–49 threads the bilayer; sequence IINSSVVLSVLIYFGKGVL.

It belongs to the ATPase B chain family. In terms of assembly, F-type ATPases have 2 components, F(1) - the catalytic core - and F(0) - the membrane proton channel. F(1) has five subunits: alpha(3), beta(3), gamma(1), delta(1), epsilon(1). F(0) has four main subunits: a(1), b(1), b'(1) and c(10-14). The alpha and beta chains form an alternating ring which encloses part of the gamma chain. F(1) is attached to F(0) by a central stalk formed by the gamma and epsilon chains, while a peripheral stalk is formed by the delta, b and b' chains.

The protein resides in the plastid. The protein localises to the chloroplast thylakoid membrane. F(1)F(0) ATP synthase produces ATP from ADP in the presence of a proton or sodium gradient. F-type ATPases consist of two structural domains, F(1) containing the extramembraneous catalytic core and F(0) containing the membrane proton channel, linked together by a central stalk and a peripheral stalk. During catalysis, ATP synthesis in the catalytic domain of F(1) is coupled via a rotary mechanism of the central stalk subunits to proton translocation. In terms of biological role, component of the F(0) channel, it forms part of the peripheral stalk, linking F(1) to F(0). The chain is ATP synthase subunit b, chloroplastic from Pinus thunbergii (Japanese black pine).